Consider the following 303-residue polypeptide: mRNA-capping enzyme subunit beta (303 aa).

It belongs to the fungal TPase family. In terms of assembly, heterodimer. The mRNA-capping enzyme is composed of two separate chains alpha and beta, respectively a mRNA guanylyltransferase and an mRNA 5'-triphosphate monophosphatase. The cofactor is Mg(2+).

It localises to the nucleus. It catalyses the reaction a 5'-end triphospho-ribonucleoside in mRNA + H2O = a 5'-end diphospho-ribonucleoside in mRNA + phosphate + H(+). Functionally, first step of mRNA capping. Converts the 5'-triphosphate end of a nascent mRNA chain into a diphosphate end. This chain is mRNA-capping enzyme subunit beta (pct1), found in Schizosaccharomyces pombe (strain 972 / ATCC 24843) (Fission yeast).